We begin with the raw amino-acid sequence, 273 residues long: Small ribosomal subunit protein uS3 (273 aa).

The region spanning 40 to 110 (IRNLFFVNYR…NLDLTINEIG (71 aa)) is the KH type-2 domain. A compositionally biased stretch (polar residues) spans 244–265 (QVLSANKLTGSDVETSSIQALT). The disordered stretch occupies residues 244–273 (QVLSANKLTGSDVETSSIQALTKPNKEDKQ).

The protein belongs to the universal ribosomal protein uS3 family. In terms of assembly, part of the 30S ribosomal subunit. Forms a tight complex with proteins S10 and S14.

Functionally, binds the lower part of the 30S subunit head. Binds mRNA in the 70S ribosome, positioning it for translation. This is Small ribosomal subunit protein uS3 from Mycoplasma pneumoniae (strain ATCC 29342 / M129 / Subtype 1) (Mycoplasmoides pneumoniae).